Here is an 815-residue protein sequence, read N- to C-terminus: Calpain-3 (815 aa).

A disordered region spans residues 7-36 (ASVAPRTAAEPRSPGPVPHPAQSKATEAGG). The Calpain catalytic domain occupies 74–417 (LYVDPEFPPD…FTKLEICNLT (344 aa)). Active-site residues include Cys129, His334, and Asn358. Residues 418-586 (ADALQSDKLQ…KRNLSEEVEN (169 aa)) are domain III. The tract at residues 587-649 (TISVDRPVPI…QESEEQQQFR (63 aa)) is linker. Positions 605–646 (SNKELGVDQESEEGKGKTSPDKQEQSPQPQPGSSDQESEEQQ) are disordered. Basic and acidic residues predominate over residues 616–628 (EEGKGKTSPDKQE). Residues 629 to 639 (QSPQPQPGSSD) are compositionally biased toward low complexity. EF-hand domains are found at residues 643–677 (EEQQ…VVNK), 686–719 (FTLE…NKIK), 716–751 (NKIK…AGFH), and 781–815 (VRLE…TMYA). A domain IV region spans residues 650–815 (NIFKQIAGDD…LEWLQLTMYA (166 aa)). The Ca(2+) site is built by Ala656, Asp659, Glu661, Glu666, Asp699, Asp701, Ser703, Lys705, Glu710, Asp729, Asp731, Ser733, Thr735, Glu740, Asp794, Asp796, Asp798, and Ile800.

Belongs to the peptidase C2 family. In terms of assembly, homodimer; via EF-hand domain 4. Interacts with TTN/titin. Interacts with CMYA5; this interaction, which results in CMYA5 proteolysis, may protect CAPN3 from autolysis. Interacts with SIMC1. Interacts with UTP25; the interaction is required for CAPN3 translocation to the nucleolus.

It is found in the cytoplasm. Its subcellular location is the nucleus. It localises to the nucleolus. It carries out the reaction Broad endopeptidase activity.. Its activity is regulated as follows. Activated by micromolar concentrations of calcium and inhibited by calpastatin. In terms of biological role, calcium-regulated non-lysosomal thiol-protease. Proteolytically cleaves CTBP1. Mediates, with UTP25, the proteasome-independent degradation of p53/TP53. The polypeptide is Calpain-3 (CAPN3) (Macaca fascicularis (Crab-eating macaque)).